We begin with the raw amino-acid sequence, 248 residues long: Mannose-binding protein C (248 aa).

A signal peptide spans 1–20 (MSLFPSLTLLLLSVVATSYS). Residues 42–99 (GINGFPGKDGRDGTKGEKGEPGQGLRGLQGPPGKLGPPGNPGSSGSPGPKGQKGDPGE) form the Collagen-like domain. A disordered region spans residues 43–113 (INGFPGKDGR…DSSLAASERK (71 aa)). P47 carries the 4-hydroxyproline modification. A compositionally biased stretch (basic and acidic residues) spans 49-61 (KDGRDGTKGEKGE). A 4-hydroxyproline mark is found at P73, P79, P82, and P88. Residues 82-91 (PGSSGSPGPK) are compositionally biased toward low complexity. Positions 112–130 (RKALQTEMARIKKWLTFSL) form a coiled coil. The C-type lectin domain maps to 134 to 245 (VGNKFFLTNG…CSSSHLALCE (112 aa)). Disulfide bonds link C155–C244 and C222–C236.

In terms of assembly, oligomeric complex of 3 or more homotrimers. Interacts with MASP1 and MASP2. Interacts with MEP1A and MEP1B and may inhibit their catalytic activity. In terms of processing, hydroxylation on proline residues within the sequence motif, GXPG, is most likely to be 4-hydroxy as this fits the requirement for 4-hydroxylation in vertebrates.

It is found in the secreted. Functionally, calcium-dependent lectin involved in innate immune defense. Binds mannose, fucose and N-acetylglucosamine on different microorganisms and activates the lectin complement pathway. Binds to late apoptotic cells, as well as to apoptotic blebs and to necrotic cells, but not to early apoptotic cells, facilitating their uptake by macrophages. The polypeptide is Mannose-binding protein C (MBL2) (Chlorocebus aethiops (Green monkey)).